We begin with the raw amino-acid sequence, 605 residues long: MGRLLRAARLPPLLSPLLLLLVGGAFLGACVAGSDEPGPEGLTSTSLLDLLLPTGLEPLDSEEPSETMGLGAGLGAPGSGFPSEENEESRILQPPQYFWEEEEELNDSSLDLGPTADYVFPDLTEKAGSIEDTSQAQELPNLPSPLPKMNLVEPPWHMPPREEEEEEEEEEEREKEEVEKQEEEEEEELLPVNGSQEEAKPQVRDFSLTSSSQTPGATKSRHEDSGDQASSGVEVESSMGPSLLLPSVTPTTVTPGDQDSTSQEAEATVLPAAGLGVEFEAPQEASEEATAGAAGLSGQHEEVPALPSFPQTTAPSGAEHPDEDPLGSRTSASSPLAPGDMELTPSSATLGQEDLNQQLLEGQAAEAQSRIPWDSTQVICKDWSNLAGKNYIILNMTENIDCEVFRQHRGPQLLALVEEVLPRHGSGHHGAWHISLSKPSEKEQHLLMTLVGEQGVVPTQDVLSMLGDIRRSLEEIGIQNYSTTSSCQARASQVRSDYGTLFVVLVVIGAICIIIIALGLLYNCWQRRLPKLKHVSHGEELRFVENGCHDNPTLDVASDSQSEMQEKHPSLNGGGALNGPGSWGALMGGKRDPEDSDVFEEDTHL.

Positions 1–32 are cleaved as a signal peptide; it reads MGRLLRAARLPPLLSPLLLLLVGGAFLGACVA. The Extracellular segment spans residues 33–500; it reads GSDEPGPEGL…ASQVRSDYGT (468 aa). A glycan (O-linked (Xyl...) (chondroitin sulfate) serine) is linked at serine 79. 2 positions are modified to sulfotyrosine: tyrosine 97 and tyrosine 118. An O-glycosylated at one site region spans residues 129–134; it reads SIEDTS. Residues 129–347 are disordered; the sequence is SIEDTSQAQE…PGDMELTPSS (219 aa). An O-linked (GalNAc...) serine glycan is attached at serine 144. The segment covering 162–189 has biased composition (acidic residues); sequence EEEEEEEEEEEREKEEVEKQEEEEEEEL. An N-linked (GlcNAc...) asparagine glycan is attached at asparagine 193. Positions 207 to 217 are enriched in polar residues; sequence SLTSSSQTPGA. Low complexity-rich tracts occupy residues 241–255 and 288–298; these read PSLL…TVTP and EATAGAAGLSG. An N-linked (GlcNAc...) asparagine glycan is attached at asparagine 395. The chain crosses the membrane as a helical span at residues 501–521; sequence LFVVLVVIGAICIIIIALGLL. Residues 522–605 are Cytoplasmic-facing; that stretch reads YNCWQRRLPK…SDVFEEDTHL (84 aa). The interval 554 to 605 is disordered; sequence LDVASDSQSEMQEKHPSLNGGGALNGPGSWGALMGGKRDPEDSDVFEEDTHL. Position 570 is a phosphoserine (serine 570). Positions 572–582 are enriched in gly residues; it reads NGGGALNGPGS. Positions 594 to 605 are enriched in acidic residues; that stretch reads EDSDVFEEDTHL. Serine 596 carries the post-translational modification Phosphoserine.

It belongs to the podocalyxin family. Homodimer; disulfide-linked. Interacts with SELL, SELE and SELP. Post-translationally, O-glycosylated; contains chondroitin sulfate. Displays sialylated O-linked oligosaccharides. Sulfation is necessary for interaction with SELL. Sialylated O-linked oligosaccharides are necessary for interaction with SELL, SELE and SELP. As to expression, expressed in T-cells, B-cells and monocytes. Expression is higher on memory and germinal center cells than on naive B-cells (at protein level). Highly expressed in brain. Moderately expressed in pancreas, kidney and lymphoid node. Weakly expressed in liver. Detected in both endothelial cells and CD34+ bone marrow cells.

It is found in the membrane. Its function is as follows. Acts as a ligand for vascular selectins. Mediates rapid rolling of leukocytes over vascular surfaces through high affinity divalent cation-dependent interactions with E-, P- and L-selectins. In Homo sapiens (Human), this protein is Podocalyxin-like protein 2 (PODXL2).